Reading from the N-terminus, the 88-residue chain is Small ribosomal subunit protein uS15 (88 aa).

It belongs to the universal ribosomal protein uS15 family. In terms of assembly, part of the 30S ribosomal subunit. Forms a bridge to the 50S subunit in the 70S ribosome, contacting the 23S rRNA.

Functionally, one of the primary rRNA binding proteins, it binds directly to 16S rRNA where it helps nucleate assembly of the platform of the 30S subunit by binding and bridging several RNA helices of the 16S rRNA. Its function is as follows. Forms an intersubunit bridge (bridge B4) with the 23S rRNA of the 50S subunit in the ribosome. This Sorangium cellulosum (strain So ce56) (Polyangium cellulosum (strain So ce56)) protein is Small ribosomal subunit protein uS15.